A 473-amino-acid polypeptide reads, in one-letter code: MNAKPGFTDYIVKDIALADFGRKEISLAETEMPGLMATREEYGPKQPLKGARIAGSLHMTIQTAVLIETLAALGADIRWVSCNIYSTQDHAAAAIAAAGIPVFAVKGETLTEYWDYTAKLFDWHGGGTPNMILDDGGDATMLVHAGYRAEQGDTAFLDKPGSEEEEIFYALVKRLLKEKPKGWFAEIAKNIKGVSEETTTGVHRLYEMANKGTLLFPAINVNDSVTKSKFDNLYGCRESLVDGIRRGTDVMLSGKVAMVAGFGDVGKGSAASLRQAGCRVMVSEVDPICALQAAMEGYEVVTMEDAAPRADIFVTATGNKDIITIEHMRAMKDRAIVCNIGHFDNEIQIASLRNLKWTNIKPQVDEIEFPDKHRIIMLSEGRLVNLGNAMGHPSFVMSASFTNQTLAQIELFANNKDSKYAKKVYVLPKTLDEKVARLHLAKIGVKLTELRKDQADYIGVKQEGPYKSDHYRY.

Residues 58–62 (HMTIQ), D135, and E197 contribute to the substrate site. 198 to 200 (TTT) is a binding site for NAD(+). K227 and D231 together coordinate substrate. NAD(+) is bound by residues N232, V265, E284, N319, 340–342 (IGH), and N385. Residue H342 participates in substrate binding. Residue H392 participates in substrate binding. Residues K467 and Y471 each contribute to the NAD(+) site.

This sequence belongs to the adenosylhomocysteinase family. As to quaternary structure, homotetramer; dimer of dimers. Requires NAD(+) as cofactor.

The protein resides in the cytoplasm. The enzyme catalyses S-adenosyl-L-homocysteine + H2O = L-homocysteine + adenosine. The protein operates within amino-acid biosynthesis; L-homocysteine biosynthesis; L-homocysteine from S-adenosyl-L-homocysteine: step 1/1. Its function is as follows. May play a key role in the regulation of the intracellular concentration of adenosylhomocysteine, which is a strong inhibitor of SAM-dependent methyltransferases. Catalyzes the hydrolysis of S-adenosyl-L-homocysteine into L-homocysteine and adenosine. This chain is Adenosylhomocysteinase, found in Bradyrhizobium elkanii.